We begin with the raw amino-acid sequence, 925 residues long: Colossin-D (925 aa).

An N-terminal signal peptide occupies residues 1–26; sequence MIKVFKDLKFLILITIILLNLKSINC. N-linked (GlcNAc...) asparagine glycans are attached at residues Asn-47, Asn-95, Asn-142, Asn-166, Asn-283, Asn-334, Asn-344, Asn-378, Asn-401, Asn-511, and Asn-642.

It belongs to the serine-aspartate repeat-containing protein (SDr) family.

It localises to the secreted. This Dictyostelium discoideum (Social amoeba) protein is Colossin-D (colD).